The sequence spans 869 residues: Dimethylglycine dehydrogenase, mitochondrial (869 aa).

The N-terminal 43 residues, 1–43 (MLRPGALRLRGLALRGSPRRPSSAGLREGQESPASPPEWKDRA), are a transit peptide targeting the mitochondrion. Residues 14–39 (LRGSPRRPSSAGLREGQESPASPPEW) form a disordered region. FAD is bound by residues 52 to 53 (CV), 73 to 74 (EK), and 80 to 88 (GSTWHAAGL). A Tele-8alpha-FAD histidine modification is found at H84. K107 carries the post-translational modification N6-acetyllysine. N6-acetyllysine; alternate is present on K141. At K141 the chain carries N6-succinyllysine; alternate. The residue at position 161 (K161) is an N6-acetyllysine. V212 lines the FAD pocket. K216 carries the N6-acetyllysine modification. W244 serves as a coordination point for FAD. N6-succinyllysine is present on residues K310 and K312. K328 and K353 each carry N6-acetyllysine. Residue 390–395 (FGYGII) participates in FAD binding. An N6-acetyllysine; alternate mark is found at K427, K469, and K516. 3 positions are modified to N6-succinyllysine; alternate: K427, K469, and K516. Residue 573 to 575 (ELT) coordinates (6S)-5,6,7,8-tetrahydrofolate. K648 carries the post-translational modification N6-acetyllysine; alternate. Position 648 is an N6-succinyllysine; alternate (K648). (6S)-5,6,7,8-tetrahydrofolate-binding positions include Y669, 676–678 (ELY), and Y737. K757 is modified (N6-acetyllysine). Position 786 is an N6-acetyllysine; alternate (K786). K786 bears the N6-succinyllysine; alternate mark. Position 788 is an N6-succinyllysine (K788).

This sequence belongs to the GcvT family. Requires FAD as cofactor.

Its subcellular location is the mitochondrion. The catalysed reaction is (6S)-5,6,7,8-tetrahydrofolyl-(gamma-L-Glu)(n) + N,N-dimethylglycine + oxidized [electron-transfer flavoprotein] + H(+) = (6R)-5,10-methylenetetrahydrofolyl-(gamma-L-Glu)(n) + sarcosine + reduced [electron-transfer flavoprotein]. It participates in amine and polyamine degradation; betaine degradation; sarcosine from betaine: step 2/2. Functionally, catalyzes the demethylation of N,N-dimethylglycine to sarcosine. Also has activity with sarcosine in vitro. In Mus musculus (Mouse), this protein is Dimethylglycine dehydrogenase, mitochondrial (Dmgdh).